Consider the following 453-residue polypeptide: Serine incorporator 1 (453 aa).

A lipid anchor (N-myristoyl glycine) is attached at Gly-2. Topologically, residues 2-39 (GSVLGLCSMASWIPCLCGSAPCLLCRCCPSGNNSTVTR) are cytoplasmic. The helical transmembrane segment at 40–60 (LIYALFLLVGVCVACVMLIPG) threads the bilayer. At 61 to 88 (MEEQLNKIPGFCENEKGMVPCNILVGYK) the chain is on the lumenal side. Residues 89–109 (AVYRLCFGLAMFYLLLSLLMI) form a helical membrane-spanning segment. Over 110 to 123 (KVKSSSDPRAAIHN) the chain is Cytoplasmic. A helical membrane pass occupies residues 124-144 (GFWFFKFAAAIAIIIGAFFIP). Residues 145-151 (EGTFTTV) lie on the Lumenal side of the membrane. A helical membrane pass occupies residues 152–172 (WFYVGMAGAFCFILIQLVLLI). The Cytoplasmic segment spans residues 173–197 (DFAHSWNESWVEKMEEGNSRCWYAA). A helical membrane pass occupies residues 198 to 218 (LLSATALNYLLSLVAVVLFFV). The Lumenal portion of the chain corresponds to 219-231 (YYTHPASCAENKA). Residues 232 to 252 (FISVNMLLCLGASIMSILPKI) form a helical membrane-spanning segment. Topologically, residues 253 to 259 (QESQPRS) are cytoplasmic. Residues 260–280 (GLLQSSVITVYTMYLTWSAMT) traverse the membrane as a helical segment. The Lumenal portion of the chain corresponds to 281-309 (NEPETECNPSLLNIIGYNTTSTVSKEGQS). A helical transmembrane segment spans residues 310–330 (VQWWHTQGIIGLILFLLCVFY). The Cytoplasmic segment spans residues 331–387 (SSIRTSNNSQVNKLTLTSDESTLIEDGGARNDGSLEDGDDVHRAVDNERDGVTYSYS). The residue at position 351 (Ser-351) is a Phosphoserine. Phosphothreonine is present on Thr-352. Ser-364 bears the Phosphoserine mark. The chain crosses the membrane as a helical span at residues 388 to 408 (FFHFMLFLASLYIMMTLTNWY). Over 409-426 (RYEPSREMKSQWTAVWVK) the chain is Lumenal. Residues 427–447 (ISSSWIGIVLYVWTLVAPLVL) traverse the membrane as a helical segment. At 448-453 (TNRDFD) the chain is on the cytoplasmic side.

Belongs to the TDE1 family. As to quaternary structure, interacts with SPTLC1.

The protein localises to the endoplasmic reticulum membrane. Enhances the incorporation of serine into phosphatidylserine and sphingolipids. The protein is Serine incorporator 1 (SERINC1) of Bos taurus (Bovine).